The chain runs to 249 residues: 5'-nucleotidase SurE (249 aa).

Residues aspartate 9, aspartate 10, serine 40, and asparagine 92 each contribute to the a divalent metal cation site.

It belongs to the SurE nucleotidase family. It depends on a divalent metal cation as a cofactor.

Its subcellular location is the cytoplasm. It carries out the reaction a ribonucleoside 5'-phosphate + H2O = a ribonucleoside + phosphate. Its function is as follows. Nucleotidase that shows phosphatase activity on nucleoside 5'-monophosphates. This chain is 5'-nucleotidase SurE, found in Shewanella baltica (strain OS195).